Here is a 1395-residue protein sequence, read N- to C-terminus: Adventurous-gliding motility protein Z (1395 aa).

One can recognise a Response regulatory domain in the interval 4-122; sequence RVLIVESEHD…ELAALSHGIV (119 aa). Asp-48 is subject to 4-aspartylphosphate. Disordered stretches follow at residues 137-172, 874-893, 919-947, 1212-1249, 1287-1312, and 1326-1395; these read LNGT…AMTE, AAES…GLRS, EQHA…ARAH, AAES…AAKQ, RYKS…EDDE, and AAAA…ELDK. Residues 213–911 are a coiled coil; sequence EGKIQILRDE…LEQTHGQLAA (699 aa). Basic and acidic residues-rich tracts occupy residues 919 to 928 and 1228 to 1249; these read EQHAHQESRK and QKER…AAKQ. Composition is skewed to low complexity over residues 1291–1306 and 1326–1352; these read KSAT…AKPA and AAAA…KKAP. The segment covering 1382–1395 has biased composition (acidic residues); sequence EDDDWTALVDELDK.

In terms of assembly, interacts with MglA.

The protein localises to the cytoplasm. Its function is as follows. Required for adventurous-gliding motility (A motility), in response to environmental signals sensed by the frz chemosensory system. Forms ordered clusters that span the cell length and that remain stationary relative to the surface across which the cells move, serving as anchor points (focal, transient adhesion sites) that allow the bacterium to move forward. Clusters disassemble at the lagging cell pole. The chain is Adventurous-gliding motility protein Z (aglZ) from Myxococcus xanthus (strain DK1622).